A 315-amino-acid chain; its full sequence is MSYFKTAMLLAGLTALFMGIGYLIGGASGALIALVVAAAMNVFTYWNSDRMVLSMYGAQEVDVRSAPDLVRMVAELAGRAGLPMPRVFIMDNPQPNAFATGRNPENAAVAVTTGLMQQLSREELAGVIAHELAHVKNHDTLLMTITATIAGAISMVAQFGMFFGGNRENNNGPGLIGSLALMILAPLGAMLVQMAISRTREYAADEMGARICGQPMWLASALGRIDAAAHQVPNVEAERAPATAHMFIINPLSGQGMDNLFATHPSTQNRIAALQRLTGEIGGGGASIGRPAGPSPRGAPRSPWSGQPRARGPWG.

Residues 16–36 form a helical membrane-spanning segment; the sequence is LFMGIGYLIGGASGALIALVV. Residue His-130 coordinates Zn(2+). Residue Glu-131 is part of the active site. His-134 is a Zn(2+) binding site. 2 helical membrane-spanning segments follow: residues 145 to 165 and 172 to 192; these read ITAT…FFGG and GPGL…AMLV. Glu-201 contributes to the Zn(2+) binding site. The interval 282–315 is disordered; the sequence is GGGGASIGRPAGPSPRGAPRSPWSGQPRARGPWG. Residues 288–303 show a composition bias toward low complexity; it reads IGRPAGPSPRGAPRSP.

Belongs to the peptidase M48B family. Requires Zn(2+) as cofactor.

The protein resides in the cell inner membrane. The protein is Protease HtpX homolog of Rhodopseudomonas palustris (strain BisB5).